We begin with the raw amino-acid sequence, 286 residues long: tRNA uridine(34) hydroxylase (286 aa).

One can recognise a Rhodanese domain in the interval 130–225 (RGDDVVFFDG…YGETFGDRGL (96 aa)). Cys-185 acts as the Cysteine persulfide intermediate in catalysis.

It belongs to the TrhO family.

The enzyme catalyses uridine(34) in tRNA + AH2 + O2 = 5-hydroxyuridine(34) in tRNA + A + H2O. Its function is as follows. Catalyzes oxygen-dependent 5-hydroxyuridine (ho5U) modification at position 34 in tRNAs. The sequence is that of tRNA uridine(34) hydroxylase from Rhodococcus erythropolis (strain PR4 / NBRC 100887).